Reading from the N-terminus, the 387-residue chain is Putative ankyrin repeat protein RBE_0984 (387 aa).

5 ANK repeats span residues 50–79, 88–119, 123–154, 159–188, and 210–239; these read YGNT…DKDI, HRET…AINV, RKHT…VINV, HKDS…KENI, and VCKM…LKGE. 2 coiled-coil regions span residues 251–278 and 311–352; these read FEDI…KKCE and SISA…ALEK.

This Rickettsia bellii (strain RML369-C) protein is Putative ankyrin repeat protein RBE_0984.